A 74-amino-acid polypeptide reads, in one-letter code: Spore germination protein GerE (74 aa).

The HTH luxR-type domain maps to 5–70 (EFQSKPLLTK…QAVVELLRMG (66 aa)). Positions 29 to 48 (TKEIASELFISEKTVRNHIS) form a DNA-binding region, H-T-H motif.

Functionally, involved in the regulation of spore formation. Directs the transcription of several genes that encode structural components of the protein coat that encases the mature spore (CotB, CotC, CotG, CotS, CotV, CotW, CotX, CotY and CotZ). Also controls the cgeAB and cgeCDE operons. This Bacillus subtilis (strain 168) protein is Spore germination protein GerE (gerE).